A 524-amino-acid chain; its full sequence is Rho guanine nucleotide exchange factor 3 (524 aa).

Ser-46 and Ser-69 each carry phosphoserine. The region spanning 121–303 is the DH domain; sequence KRQEAIFELS…QGIVAEINTK (183 aa). A PH domain is found at 290–448; the sequence is INIIQGIVAE…WLNCIRQAKE (159 aa). The segment at 461–524 is disordered; the sequence is DSEGLVQGPG…CANSRPEESV (64 aa). A compositionally biased stretch (basic and acidic residues) spans 472–484; the sequence is ENREPQGETKLEQ.

In terms of assembly, interacts with RHOA and RHOB.

Its subcellular location is the cytoplasm. Acts as a guanine nucleotide exchange factor (GEF) for RhoA and RhoB GTPases. The sequence is that of Rho guanine nucleotide exchange factor 3 (Arhgef3) from Mus musculus (Mouse).